The primary structure comprises 354 residues: MLYLLAQWLHFEGFSNLIRYQTFRAGATLLTALVIGLIIGPRFINMLRVRQGKGQPIREDGPQSHLAKRGTPTMGGLMIVTALTLSLLLWMDVTSRLVWACAVVTLGFGLIGFLDDYDKVTKYAHKGVPAKVRLAGEFVVAAFAAWLAVGETNLYVPVFSNLYVPLGPFYYLFAIFVIVGAGNAVNLTDGLDGLAIMPVIIAAGTFAIIAYLAGRYDFATYLGIPHVKGAGELAIFCAAMMGAGLAFLWFNAPPAAVFMGDTGSLALGGALGVIAVAAHHEIVLAIVGGLFVMEAVSVIVQVAVYKRTGKRVFRMAPIHHHFEQLGWKESTVVIRFWIVSIVLALIGLATLKVR.

Transmembrane regions (helical) follow at residues 27-47 (ATLLTALVIGLIIGPRFINML), 73-93 (TMGGLMIVTALTLSLLLWMDV), 97-117 (LVWACAVVTLGFGLIGFLDDY), 138-158 (FVVAAFAAWLAVGETNLYVPV), 162-182 (LYVPLGPFYYLFAIFVIVGAG), 193-213 (GLAIMPVIIAAGTFAIIAYLA), 230-250 (AGELAIFCAAMMGAGLAFLWF), 256-276 (AVFMGDTGSLALGGALGVIAV), 282-302 (IVLAIVGGLFVMEAVSVIVQV), and 331-351 (TVVIRFWIVSIVLALIGLATL).

Belongs to the glycosyltransferase 4 family. MraY subfamily. It depends on Mg(2+) as a cofactor.

It is found in the cell inner membrane. The enzyme catalyses UDP-N-acetyl-alpha-D-muramoyl-L-alanyl-gamma-D-glutamyl-meso-2,6-diaminopimeloyl-D-alanyl-D-alanine + di-trans,octa-cis-undecaprenyl phosphate = di-trans,octa-cis-undecaprenyl diphospho-N-acetyl-alpha-D-muramoyl-L-alanyl-D-glutamyl-meso-2,6-diaminopimeloyl-D-alanyl-D-alanine + UMP. Its pathway is cell wall biogenesis; peptidoglycan biosynthesis. Functionally, catalyzes the initial step of the lipid cycle reactions in the biosynthesis of the cell wall peptidoglycan: transfers peptidoglycan precursor phospho-MurNAc-pentapeptide from UDP-MurNAc-pentapeptide onto the lipid carrier undecaprenyl phosphate, yielding undecaprenyl-pyrophosphoryl-MurNAc-pentapeptide, known as lipid I. The polypeptide is Phospho-N-acetylmuramoyl-pentapeptide-transferase (Novosphingobium aromaticivorans (strain ATCC 700278 / DSM 12444 / CCUG 56034 / CIP 105152 / NBRC 16084 / F199)).